The primary structure comprises 316 residues: BRCA2 and CDKN1A-interacting protein (316 aa).

The interval 1 to 57 (MASKAKKRAVGNGIQRPLGAPGQREEEEEEEDEVEDEEEDEDDSDEEEDEVDEIVDE) is disordered. The segment covering 25–57 (EEEEEEEDEVEDEEEDEDDSDEEEDEVDEIVDE) has biased composition (acidic residues). Residues Ser44 and Ser114 each carry the phosphoserine modification. The segment at 61-169 (IEFEAYSISD…EQSMVEQLDK (109 aa)) is interaction with BRCA2. Positions 163–261 (MVEQLDKLLN…NAEEEFFYEK (99 aa)) are interaction with CDKN1A. Phosphoserine is present on Ser283.

This sequence belongs to the BCP1 family. As to quaternary structure, interacts with BRCA2, CDKN1A and MTDH/LYRIC. Interacts with DCTN1/p150-glued and ACTR1A/ARP1. Interacts with alpha-, beta- and gamma-tubulins. Interacts with TENT5C; the interaction has no effect on TENT5C poly(A) polymerase function. In terms of tissue distribution, expressed in the testes (at protein level).

Its subcellular location is the nucleus. It localises to the cytoplasm. The protein resides in the cytoskeleton. It is found in the microtubule organizing center. The protein localises to the centrosome. Its subcellular location is the centriole. It localises to the spindle pole. In terms of biological role, during interphase, required for microtubule organizing and anchoring activities. During mitosis, required for the organization and stabilization of the spindle pole. May promote cell cycle arrest by enhancing the inhibition of CDK2 activity by CDKN1A. May be required for repair of DNA damage by homologous recombination in conjunction with BRCA2. May not be involved in non-homologous end joining (NHEJ). The chain is BRCA2 and CDKN1A-interacting protein (Bccip) from Mus musculus (Mouse).